A 251-amino-acid polypeptide reads, in one-letter code: MILLKIIHIIFVMIFLSIFFPKSLYASTSLIRKDHIIQKNLENFDDQSAYALGVSLGNYINHSFREQKRLGVILDKNSLLSGIRDSLSGKTILSDQEISMELIKLEKKLKYFEDIVLKKEAHNNKIQGDLYIKKMLKKKDARHTSSGLVFFIKKKGSGKFLHDSDVITVHYKGSLINGNEFDNSYKRGQPLSFSLDSVIPGWIEGLKYIKKGGLIKLVIPPKLAYGETGVPGIPGNSTLIFEIELIDIQSK.

The PPIase FKBP-type domain occupies 164–251 (SDVITVHYKG…EIELIDIQSK (88 aa)).

This sequence belongs to the FKBP-type PPIase family.

It catalyses the reaction [protein]-peptidylproline (omega=180) = [protein]-peptidylproline (omega=0). Functionally, PPIases accelerate the folding of proteins. It catalyzes the cis-trans isomerization of proline imidic peptide bonds in oligopeptides. This Buchnera aphidicola subsp. Baizongia pistaciae (strain Bp) protein is FKBP-type peptidyl-prolyl cis-trans isomerase FkpA (fkpA).